We begin with the raw amino-acid sequence, 237 residues long: 1-(5-phosphoribosyl)-5-[(5-phosphoribosylamino)methylideneamino] imidazole-4-carboxamide isomerase (237 aa).

Aspartate 8 functions as the Proton acceptor in the catalytic mechanism. The active-site Proton donor is aspartate 130.

It belongs to the HisA/HisF family.

The protein resides in the cytoplasm. The catalysed reaction is 1-(5-phospho-beta-D-ribosyl)-5-[(5-phospho-beta-D-ribosylamino)methylideneamino]imidazole-4-carboxamide = 5-[(5-phospho-1-deoxy-D-ribulos-1-ylimino)methylamino]-1-(5-phospho-beta-D-ribosyl)imidazole-4-carboxamide. Its pathway is amino-acid biosynthesis; L-histidine biosynthesis; L-histidine from 5-phospho-alpha-D-ribose 1-diphosphate: step 4/9. This Caldicellulosiruptor bescii (strain ATCC BAA-1888 / DSM 6725 / KCTC 15123 / Z-1320) (Anaerocellum thermophilum) protein is 1-(5-phosphoribosyl)-5-[(5-phosphoribosylamino)methylideneamino] imidazole-4-carboxamide isomerase.